A 633-amino-acid polypeptide reads, in one-letter code: Basic helix-loop-helix ARNT-like protein 1 (633 aa).

The disordered stretch occupies residues 1-65 (MADQRMDISS…GMDTDKDDQH (65 aa)). S17 carries the post-translational modification Phosphoserine; by GSK3-beta. The segment covering 24–33 (ISSSLSTSGM) has biased composition (polar residues). A Nuclear localization signal motif is present at residues 36–41 (NRKRKG). Positions 79–132 (NAREAHSQIEKRRRDKMNSFIDELASLVPTCNAMSRKLDKLTVLRMAVQHMKTL) constitute a bHLH domain. Position 85 is a phosphoserine (S85). Phosphoserine; by CK2 is present on S97. A Nuclear export signal 1 motif is present at residues 149–159 (LSDDELKHLIL). The region spanning 150–222 (SDDELKHLIL…EQLSSSDTAP (73 aa)) is the PAS 1 domain. K259 is covalently cross-linked (Glycyl lysine isopeptide (Lys-Gly) (interchain with G-Cter in SUMO2 and SUMO3)). K266 is covalently cross-linked (Glycyl lysine isopeptide (Lys-Gly) (interchain with G-Cter in SUMO)). A PAS 2 domain is found at 333–403 (PQPVNGEIRV…ECHRQVLQTR (71 aa)). Positions 368 to 376 (LAYLPQELL) match the Nuclear export signal 2 motif. Positions 408–451 (TNCYKFKIKDGSFITLRSRWFSFMNPWTKEVEYIVSTNTVVSTN) constitute a PAC domain. Disordered regions lie at residues 472–499 (SVLQ…RAGA) and 518–555 (GSSP…TPDI). Positions 518-528 (GSSPSSCGSSP) are enriched in low complexity. N6-acetyllysine is present on K545.

Component of the circadian clock oscillator which includes the CRY1/2 proteins, CLOCK or NPAS2, BMAL1 or BMAL2, CSNK1D and/or CSNK1E, TIMELESS and the PER1/2/3 proteins. Forms a heterodimer with CLOCK. The CLOCK-BMAL1 heterodimer is required for E-box-dependent transactivation, for CLOCK nuclear translocation and degradation, and, for phosphorylation of both CLOCK and BMAL1. Interacts with PER1, PER2, CRY1 and CRY2 and this interaction requires a translocation to the nucleus. Interaction of the CLOCK-BMAL1 heterodimer with PER or CRY inhibits transcription activation. Post-translationally, ubiquitinated, leading to its proteasomal degradation. Deubiquitinated by USP9X. In terms of processing, O-glycosylated; contains O-GlcNAc. O-glycosylation by OGT prevents protein degradation by inhibiting ubiquitination. It also stabilizes the CLOCK-BMAL1 heterodimer thereby increasing CLOCK-BMAL1-mediated transcription of genes in the negative loop of the circadian clock such as PER1/2/3 and CRY1/2. Acetylated on Lys-545 by CLOCK during the repression phase of the circadian cycle. Acetylation facilitates recruitment of CRY1 protein and initiates the repression phase of the circadian cycle. Acetylated at Lys-545 by KAT5 during the activation phase of the cycle, leading to recruitment of the positive transcription elongation factor b (P-TEFb) and BRD4, followed by productive elongation of circadian transcripts. Deacetylated by SIRT1, which may result in decreased protein stability. Post-translationally, phosphorylated upon dimerization with CLOCK. Phosphorylation enhances the transcriptional activity, alters the subcellular localization and decreases the stability of the CLOCK-BMAL1 heterodimer by promoting its degradation. Phosphorylation shows circadian variations in the liver with a peak between CT10 to CT14. Phosphorylation at Ser-97 by CK2 is essential for its nuclear localization, its interaction with CLOCK and controls CLOCK nuclear entry. Dephosphorylation at Ser-85 is important for dimerization with CLOCK and transcriptional activity. In terms of processing, sumoylated on Lys-266 upon dimerization with CLOCK. Predominantly conjugated to poly-SUMO2/3 rather than SUMO1 and the level of these conjugates undergo rhythmic variation, peaking at CT9-CT12. Sumoylation localizes it exclusively to the PML body and promotes its ubiquitination in the PML body, ubiquitin-dependent proteasomal degradation and the transcriptional activity of the CLOCK-BMAL1 heterodimer. Undergoes lysosome-mediated degradation in a time-dependent manner in the liver.

It localises to the nucleus. The protein localises to the cytoplasm. It is found in the PML body. Functionally, transcriptional activator which forms a core component of the circadian clock. The circadian clock, an internal time-keeping system, regulates various physiological processes through the generation of approximately 24 hour circadian rhythms in gene expression, which are translated into rhythms in metabolism and behavior. It is derived from the Latin roots 'circa' (about) and 'diem' (day) and acts as an important regulator of a wide array of physiological functions including metabolism, sleep, body temperature, blood pressure, endocrine, immune, cardiovascular, and renal function. Consists of two major components: the central clock, residing in the suprachiasmatic nucleus (SCN) of the brain, and the peripheral clocks that are present in nearly every tissue and organ system. Both the central and peripheral clocks can be reset by environmental cues, also known as Zeitgebers (German for 'timegivers'). The predominant Zeitgeber for the central clock is light, which is sensed by retina and signals directly to the SCN. The central clock entrains the peripheral clocks through neuronal and hormonal signals, body temperature and feeding-related cues, aligning all clocks with the external light/dark cycle. Circadian rhythms allow an organism to achieve temporal homeostasis with its environment at the molecular level by regulating gene expression to create a peak of protein expression once every 24 hours to control when a particular physiological process is most active with respect to the solar day. Transcription and translation of core clock components (CLOCK, NPAS2, BMAL1, BMAL2, PER1, PER2, PER3, CRY1 and CRY2) plays a critical role in rhythm generation, whereas delays imposed by post-translational modifications (PTMs) are important for determining the period (tau) of the rhythms (tau refers to the period of a rhythm and is the length, in time, of one complete cycle). A diurnal rhythm is synchronized with the day/night cycle, while the ultradian and infradian rhythms have a period shorter and longer than 24 hours, respectively. Disruptions in the circadian rhythms contribute to the pathology of cardiovascular diseases, cancer, metabolic syndromes and aging. A transcription/translation feedback loop (TTFL) forms the core of the molecular circadian clock mechanism. Transcription factors, CLOCK or NPAS2 and BMAL1 or BMAL2, form the positive limb of the feedback loop, act in the form of a heterodimer and activate the transcription of core clock genes and clock-controlled genes (involved in key metabolic processes), harboring E-box elements (5'-CACGTG-3') within their promoters. The core clock genes: PER1/2/3 and CRY1/2 which are transcriptional repressors form the negative limb of the feedback loop and interact with the CLOCK|NPAS2-BMAL1|BMAL2 heterodimer inhibiting its activity and thereby negatively regulating their own expression. This heterodimer also activates nuclear receptors NR1D1/2 and RORA/B/G, which form a second feedback loop and which activate and repress BMAL1 transcription, respectively. The preferred binding motif for the CLOCK-BMAL1 heterodimer is 5'-CACGTGA-3', which contains a flanking adenine nucleotide at the 3-prime end of the canonical 6-nucleotide E-box sequence. CLOCK specifically binds to the half-site 5'-CAC-3', while BMAL1 binds to the half-site 5'-GTGA-3'. Essential for the rhythmic interaction of CLOCK with ASS1 and plays a critical role in positively regulating CLOCK-mediated acetylation of ASS1. Plays a role in protecting against lethal sepsis by limiting the expression of immune checkpoint protein CD274 in macrophages in a PKM2-dependent manner. This chain is Basic helix-loop-helix ARNT-like protein 1 (BMAL1), found in Tyto alba (Barn owl).